Here is a 186-residue protein sequence, read N- to C-terminus: UPF0340 protein SZO_02480 (186 aa).

Belongs to the UPF0340 family.

This chain is UPF0340 protein SZO_02480, found in Streptococcus equi subsp. zooepidemicus (strain H70).